A 380-amino-acid polypeptide reads, in one-letter code: Queuine tRNA-ribosyltransferase (380 aa).

The active-site Proton acceptor is the Asp-96. Substrate contacts are provided by residues 96–100, Asp-150, Gln-193, and Gly-220; that span reads DSGGF. Positions 251 to 257 are RNA binding; sequence GVGAPDS. Catalysis depends on Asp-270, which acts as the Nucleophile. The segment at 275-279 is RNA binding; important for wobble base 34 recognition; that stretch reads TRIAR. Zn(2+) contacts are provided by Cys-308, Cys-310, Cys-313, and His-339.

Belongs to the queuine tRNA-ribosyltransferase family. In terms of assembly, homodimer. Within each dimer, one monomer is responsible for RNA recognition and catalysis, while the other monomer binds to the replacement base PreQ1. Requires Zn(2+) as cofactor.

The catalysed reaction is 7-aminomethyl-7-carbaguanine + guanosine(34) in tRNA = 7-aminomethyl-7-carbaguanosine(34) in tRNA + guanine. It participates in tRNA modification; tRNA-queuosine biosynthesis. Functionally, catalyzes the base-exchange of a guanine (G) residue with the queuine precursor 7-aminomethyl-7-deazaguanine (PreQ1) at position 34 (anticodon wobble position) in tRNAs with GU(N) anticodons (tRNA-Asp, -Asn, -His and -Tyr). Catalysis occurs through a double-displacement mechanism. The nucleophile active site attacks the C1' of nucleotide 34 to detach the guanine base from the RNA, forming a covalent enzyme-RNA intermediate. The proton acceptor active site deprotonates the incoming PreQ1, allowing a nucleophilic attack on the C1' of the ribose to form the product. After dissociation, two additional enzymatic reactions on the tRNA convert PreQ1 to queuine (Q), resulting in the hypermodified nucleoside queuosine (7-(((4,5-cis-dihydroxy-2-cyclopenten-1-yl)amino)methyl)-7-deazaguanosine). This chain is Queuine tRNA-ribosyltransferase, found in Streptococcus equi subsp. zooepidemicus (strain H70).